A 372-amino-acid polypeptide reads, in one-letter code: RNA polymerase sigma factor SigA (372 aa).

The tract at residues 139–209 (LAEANLRLVV…TRAIADQART (71 aa)) is sigma-70 factor domain-2. Positions 163–166 (DLIQ) match the Interaction with polymerase core subunit RpoC motif. A sigma-70 factor domain-3 region spans residues 218–294 (ETINKLIRVQ…DQDALAPSDA (77 aa)). The segment at 307–360 (VLDTLTDREENVLRLRFGLDDGRTRTLEEVGKVFGVTRERIRQIEAKALRKLRH) is sigma-70 factor domain-4. The segment at residues 333-352 (LEEVGKVFGVTRERIRQIEA) is a DNA-binding region (H-T-H motif).

Belongs to the sigma-70 factor family. RpoD/SigA subfamily. Interacts transiently with the RNA polymerase catalytic core.

It is found in the cytoplasm. Its function is as follows. Sigma factors are initiation factors that promote the attachment of RNA polymerase to specific initiation sites and are then released. This sigma factor is the primary sigma factor during exponential growth. The polypeptide is RNA polymerase sigma factor SigA (Halalkalibacterium halodurans (strain ATCC BAA-125 / DSM 18197 / FERM 7344 / JCM 9153 / C-125) (Bacillus halodurans)).